Reading from the N-terminus, the 361-residue chain is Putative pumilio homolog 22 (361 aa).

Residues 5–348 (RGYDLASQVL…NIVAIIDSET (344 aa)) form the PUM-HD domain. Pumilio repeat units lie at residues 27 to 63 (HITY…EFLD) and 64 to 103 (LIAQ…RLHE). The Pumilio 3; degenerate repeat unit spans residues 104 to 131 (LMAEFDEVLSTSVTADVDKLHKLASKLM). One copy of the Pumilio 4 repeat lies at 132-167 (LDSDLFFEFVITRRGSLMIQIILGKSEEVDQVILAG). A Pumilio 5; degenerate repeat occupies 168–205 (VKQRFIDVTTNFYGYRIMIQTIKVFKKRGDLKVYDQIL). A Pumilio 6; degenerate repeat occupies 206–243 (RLIGVHALYLTKDPDMGNKTFQHAINLHHQDCTTFIAC). Pumilio repeat units lie at residues 244–284 (GLQS…EIVK) and 285–319 (CDED…DFFG).

Its subcellular location is the cytoplasm. Functionally, sequence-specific RNA-binding protein that regulates translation and mRNA stability by binding the 3'-UTR of target mRNAs. This is Putative pumilio homolog 22 (APUM22) from Arabidopsis thaliana (Mouse-ear cress).